Reading from the N-terminus, the 120-residue chain is Large ribosomal subunit protein eL8 (120 aa).

Belongs to the eukaryotic ribosomal protein eL8 family. In terms of assembly, part of the 50S ribosomal subunit. Probably part of the RNase P complex.

Its subcellular location is the cytoplasm. Functionally, multifunctional RNA-binding protein that recognizes the K-turn motif in ribosomal RNA, the RNA component of RNase P, box H/ACA, box C/D and box C'/D' sRNAs. This Halorubrum lacusprofundi (strain ATCC 49239 / DSM 5036 / JCM 8891 / ACAM 34) protein is Large ribosomal subunit protein eL8.